The chain runs to 211 residues: Protein CHLORORESPIRATORY REDUCTION 41, chloroplastic (211 aa).

Residues 1–38 constitute a chloroplast transit peptide; the sequence is MASTSTLLLPSLSSKNLHIAVPIRTNSFVRRTTKFSTK. A coiled-coil region spans residues 136-163; sequence AKAGEIVAERAREEAEVLRDEGKVEERM.

In terms of assembly, biogenesis factor component of the plastidial NDH subcomplex A.

Its subcellular location is the plastid. The protein resides in the chloroplast. It localises to the chloroplast stroma. Its function is as follows. Required for both formation and activity of the chloroplast NAD(P)H dehydrogenase (NDH) complex of the photosynthetic electron transport chain. Functions in assembly or stabilization of the NDH complex; probably involved, together with NdhO and NdhH, in the formation of an NDH subcomplex A assembly intermediate (NAI500). The sequence is that of Protein CHLORORESPIRATORY REDUCTION 41, chloroplastic from Arabidopsis thaliana (Mouse-ear cress).